Consider the following 837-residue polypeptide: Protein translocase subunit SecA 1 (837 aa).

Residues Gln85, 103–107 (GEGKT), and Asp492 contribute to the ATP site. Residues 787–806 (QEVAKGEAVHPKEDGEEPKK) are compositionally biased toward basic and acidic residues. The disordered stretch occupies residues 787-813 (QEVAKGEAVHPKEDGEEPKKKPIRKAV). Zn(2+) is bound by residues Cys821, Cys823, Cys832, and Cys833.

The protein belongs to the SecA family. As to quaternary structure, monomer and homodimer. Part of the essential Sec protein translocation apparatus which comprises SecA, SecYEG and auxiliary proteins SecDF. Other proteins may also be involved. Zn(2+) serves as cofactor.

The protein resides in the cell membrane. It is found in the cytoplasm. It catalyses the reaction ATP + H2O + cellular proteinSide 1 = ADP + phosphate + cellular proteinSide 2.. In terms of biological role, part of the Sec protein translocase complex. Interacts with the SecYEG preprotein conducting channel. Has a central role in coupling the hydrolysis of ATP to the transfer of proteins into and across the cell membrane, serving as an ATP-driven molecular motor driving the stepwise translocation of polypeptide chains across the membrane. The polypeptide is Protein translocase subunit SecA 1 (Geobacillus thermodenitrificans (strain NG80-2)).